A 158-amino-acid chain; its full sequence is Small ribosomal subunit protein uS17 (158 aa).

An N-acetylalanine modification is found at alanine 2. Arginine 22 is subject to Citrulline. Lysine 38, lysine 45, and lysine 58 each carry N6-acetyllysine. Cysteine 60 carries the S-palmitoyl cysteine lipid modification. Residue serine 67 is modified to Phosphoserine. The residue at position 69 (arginine 69) is an Omega-N-methylarginine. Serine 110 carries the phosphoserine modification.

The protein belongs to the universal ribosomal protein uS17 family. Component of the small ribosomal subunit. Part of the small subunit (SSU) processome, composed of more than 70 proteins and the RNA chaperone small nucleolar RNA (snoRNA) U3. In terms of processing, citrullinated by PADI4.

It is found in the cytoplasm. The protein resides in the nucleus. The protein localises to the nucleolus. Component of the small ribosomal subunit. The ribosome is a large ribonucleoprotein complex responsible for the synthesis of proteins in the cell. Part of the small subunit (SSU) processome, first precursor of the small eukaryotic ribosomal subunit. During the assembly of the SSU processome in the nucleolus, many ribosome biogenesis factors, an RNA chaperone and ribosomal proteins associate with the nascent pre-rRNA and work in concert to generate RNA folding, modifications, rearrangements and cleavage as well as targeted degradation of pre-ribosomal RNA by the RNA exosome. In Mus musculus (Mouse), this protein is Small ribosomal subunit protein uS17 (Rps11).